The following is an 86-amino-acid chain: MVKIRLTRGGAKKRPFYQIIVTDSRNKRDGRNIERVGHYNPVAQGAESRVVLNMARVEHWVRNGAQLTDKVRSLLKEVSKTQATAA.

This sequence belongs to the bacterial ribosomal protein bS16 family.

In Xylella fastidiosa (strain M23), this protein is Small ribosomal subunit protein bS16.